Here is a 136-residue protein sequence, read N- to C-terminus: Small ribosomal subunit protein uS8 (136 aa).

It belongs to the universal ribosomal protein uS8 family. In terms of assembly, part of the 30S ribosomal subunit. Contacts proteins S5 and S12.

In terms of biological role, one of the primary rRNA binding proteins, it binds directly to 16S rRNA central domain where it helps coordinate assembly of the platform of the 30S subunit. This Synechococcus sp. (strain JA-2-3B'a(2-13)) (Cyanobacteria bacterium Yellowstone B-Prime) protein is Small ribosomal subunit protein uS8.